Reading from the N-terminus, the 1124-residue chain is Anillin (1124 aa).

Methionine 1 is subject to N-acetylmethionine. Basic and acidic residues predominate over residues 1 to 25 (MDPFTEKLLERTRARRENLQRKMAE). The segment at 1 to 45 (MDPFTEKLLERTRARRENLQRKMAERPTAAPRSMTHAKRARQPLS) is required for ubiquitination. 2 disordered regions span residues 1 to 113 (MDPF…ADTI) and 136 to 196 (ATAA…ATPV). Residues 1 to 155 (MDPFTEKLLE…MQKLAEQRRR (155 aa)) form an interaction with CD2AP region. The tract at residues 1–230 (MDPFTEKLLE…AKQNSVQEQP (230 aa)) is nuclear localization. 2 positions are modified to phosphoserine: serine 54 and serine 72. The segment covering 77–96 (VEVSNLENKQPVESTSAKSC) has biased composition (polar residues). 2 positions are modified to phosphoserine: serine 97 and serine 102. The segment covering 97–108 (SPSPVSPQVQPQ) has biased composition (low complexity). Positions 148-158 (KLAEQRRRWDN) are enriched in basic and acidic residues. Phosphoserine is present on residues serine 172 and serine 182. Position 194 is a phosphothreonine (threonine 194). Phosphoserine is present on residues serine 225 and serine 252. The segment at 231-676 (GTACLSKFSS…RDLLYSIDAY (446 aa)) is interaction with F-actin. Lysine 254 participates in a covalent cross-link: Glycyl lysine isopeptide (Lys-Gly) (interchain with G-Cter in SUMO1). Phosphoserine is present on serine 261. Positions 294–305 (TSPVKSTTSITD) are enriched in polar residues. The disordered stretch occupies residues 294–328 (TSPVKSTTSITDAKSCEGQNPELLPKTPISPLKTG). Threonine 320 carries the phosphothreonine modification. 2 positions are modified to phosphoserine: serine 323 and serine 339. At threonine 364 the chain carries Phosphothreonine. N6-acetyllysine is present on lysine 371. Over residues 380–389 (RCQEHSKESP) the composition is skewed to basic and acidic residues. The tract at residues 380–399 (RCQEHSKESPARSTPHRTPI) is disordered. Residues threonine 397 and threonine 401 each carry the phosphothreonine modification. Serine 417, serine 419, serine 449, serine 485, serine 518, serine 553, and serine 561 each carry phosphoserine. A coiled-coil region spans residues 569–604 (FSDVLEEGELDMEKSQEEMDQALAESSEEQEDALNI). Disordered regions lie at residues 579–600 (DMEK…EQED) and 625–664 (LVST…SLGS). Basic and acidic residues-rich tracts occupy residues 631-644 (LELK…ESPK) and 654-664 (PRAESGDSLGS). Serine 637, serine 642, serine 658, serine 661, and serine 664 each carry phosphoserine. Tyrosine 671 is modified (phosphotyrosine). Serine 678, serine 688, serine 792, and serine 927 each carry phosphoserine. Positions 730–1124 (QQTVIYQASQ…DACYKPIGKP (395 aa)) are localization to the cleavage furrow. The PH domain occupies 983–1107 (SVEERGFLTI…WMQKLNQVLV (125 aa)).

As to quaternary structure, interacts with F-actin. Interacts with CD2AP. May interact with RHOA. Interacts with FZR1/CDH1 during mitotic exit. Post-translationally, phosphorylated during mitosis. Ubiquitinated, and this requires FZR1/CDH1. As to expression, ubiquitously expressed. Present at highest levels in the brain, at high levels in the placenta and testis, at intermediate levels in the intestine, ovary, skeletal muscle and thymus and at lower levels in heart, kidney, liver, lung, pancreas, prostate and spleen. In the kidney, it is widely expressed in tubules, but sparsely expressed in the glomerulus. Expression is significantly increased in renal biopsy specimens from idiopathic FSGS. Overexpressed in many tumor types including breast, colorectal, endometrial, hepatic, kidney, lung, ovarian and pancreatic tumors.

Its subcellular location is the nucleus. It localises to the cytoplasm. It is found in the cytoskeleton. The protein localises to the cell cortex. The protein resides in the cell projection. Its subcellular location is the bleb. In terms of biological role, required for cytokinesis. Essential for the structural integrity of the cleavage furrow and for completion of cleavage furrow ingression. Plays a role in bleb assembly during metaphase and anaphase of mitosis. May play a significant role in podocyte cell migration. This is Anillin (ANLN) from Homo sapiens (Human).